The following is a 1020-amino-acid chain: MSTPTPPSSGRPKQPFPSSPGSSRRSKILGILVAIIAIAIFIVPVVVSTYTDFAWFRSVDYQGVFMNVIVTRLVLFVVFGLIGALISWLAAFLAYRARPDEIESLGTSSPLAEYRPLIRRNMRPFLVGIPLFVGVITGMIVQSNWRSVLLFLNGSNFGVHDPQFDKDLGFYAFNLPFLQMLVSTFSVLLILAFVINGIGHYLLGSITTGNPRVGEKASISTNARRQLAVIAGVWMLLKAVGYWFDRYGLLTRSHETFTGASYTDINAVLPAQIVLLVISIFVAAMFFVTIVLRDLRIPALAVALMVGSSLTVGLAWPAMLEQFSVNPNRAEKEREYIARNIEATRYAYGIGDDKVTYDRDWGASGDAASKEQKKAVADDSATLSNVRLLDPEVLTPTFTQQQQLRNFYGFPDELAIDRYEVDGKMRDFVVAARELNPNTLDGNQNDWINRHTVYTHGNGFVAAPSRKVDEVARDVGSARGGYPVYTVADLQSMQSGKQGGELKLDVKQPRIYFGPVIASSNQNNSDYAIVGNTEGEPLEYDTDASNYTYTGTGGVDVSNYFNRLMFSAHFESMNMLLTDRIGEGSKILYERDPRERVHKVAPWLTTDSKTYPIVIDGRVKWVVDGYTTLNNLPYSERIGLTDSTADAINPDGVSETQVVDNEVGYIRNSVKAVVDAYDGSVDLYAFDEADPVLKAWRGAFPGVVKPRSEISKELEDHLRYPEDMFKVQRELIAKYHVSDPGVFFQNDSFWSVPTDPTAPQDRQDNAQPPYYVVAADPETNKPSFQLITPFRGLRREFLAAHMSVGSDPDNYGKINVRVLPTGTQTLGPNQAQDTMMSSDEIARERTLLKGTNDLTNGNLLTLPVGDGQILYVEPVYSQRSGQDSAFPKLLRVLVSYNGQVGYAPTIAEALDQVGIKTSSTTDIQEIDGSVVDPTKDGGSGNKGDKGKDADKDKKSKDEQSSDAKGAAGKSDDKGTDTAPEQRVRDAMDKVNKTRESGTFEEFGKALDELDKAVQDLQSER.

A compositionally biased stretch (pro residues) spans 1–18 (MSTPTPPSSGRPKQPFPS). Residues 1-23 (MSTPTPPSSGRPKQPFPSSPGSS) are disordered. The next 7 helical transmembrane spans lie at 28 to 48 (ILGILVAIIAIAIFIVPVVVS), 73 to 93 (LVLFVVFGLIGALISWLAAFL), 125 to 145 (FLVGIPLFVGVITGMIVQSNW), 175 to 195 (LPFLQMLVSTFSVLLILAFVI), 227 to 247 (LAVIAGVWMLLKAVGYWFDRY), 272 to 292 (QIVLLVISIFVAAMFFVTIVL), and 300 to 320 (LAVALMVGSSLTVGLAWPAML). A disordered region spans residues 924–998 (QEIDGSVVDP…KVNKTRESGT (75 aa)). Composition is skewed to basic and acidic residues over residues 942 to 961 (KGDKGKDADKDKKSKDEQSS) and 969 to 998 (KSDDKGTDTAPEQRVRDAMDKVNKTRESGT).

It belongs to the UPF0182 family.

It localises to the cell membrane. In Corynebacterium jeikeium (strain K411), this protein is UPF0182 protein jk1603.